The chain runs to 392 residues: Sterol methyltransferase-like 3 (392 aa).

Residues 20 to 42 (VTPWQAAAGVTAAIFIGSYLWHS) form a helical membrane-spanning segment.

It belongs to the class I-like SAM-binding methyltransferase superfamily. Erg6/SMT family.

Its subcellular location is the microsome membrane. In terms of biological role, unable to convert squalene, botryococcene, cycloartenol, zymosterol or lanosterol to mono-, di-, tri- or tetramethylated derivatives. This Botryococcus braunii (Green alga) protein is Sterol methyltransferase-like 3 (SMT-3).